An 858-amino-acid polypeptide reads, in one-letter code: DNA mismatch repair protein MutS (858 aa).

613-620 (GPNMAGKS) provides a ligand contact to ATP.

Belongs to the DNA mismatch repair MutS family.

Functionally, this protein is involved in the repair of mismatches in DNA. It is possible that it carries out the mismatch recognition step. This protein has a weak ATPase activity. The polypeptide is DNA mismatch repair protein MutS (Dehalococcoides mccartyi (strain ATCC BAA-2266 / KCTC 15142 / 195) (Dehalococcoides ethenogenes (strain 195))).